A 56-amino-acid chain; its full sequence is Large ribosomal subunit protein bL32 (56 aa).

The tract at residues 1–38 is disordered; it reads MAVQQNKKSRSKRGMRRSHDSLSTAQLSVDATSGELHR. A compositionally biased stretch (basic residues) spans 7 to 16; sequence KKSRSKRGMR. Residues 21 to 31 are compositionally biased toward polar residues; sequence SLSTAQLSVDA.

It belongs to the bacterial ribosomal protein bL32 family.

This chain is Large ribosomal subunit protein bL32, found in Shewanella woodyi (strain ATCC 51908 / MS32).